A 529-amino-acid chain; its full sequence is Glycerol kinase 5 (529 aa).

Residues Ser-28 and Ser-29 each contribute to the ATP site. Residues Arg-98, Asp-275, and Gln-276 each coordinate glycerol. The ATP site is built by Thr-297, Gly-340, and Gly-440.

The protein belongs to the FGGY kinase family.

It localises to the cytoplasm. It carries out the reaction glycerol + ATP = sn-glycerol 3-phosphate + ADP + H(+). It participates in polyol metabolism; glycerol degradation via glycerol kinase pathway; sn-glycerol 3-phosphate from glycerol: step 1/1. In terms of biological role, skin-specific kinase that plays a key role in glycerol metabolism, catalyzing its phosphorylation to produce sn-glycerol 3-phosphate. Involved in skin-specific regulation of sterol regulatory element-binding protein (SREBP) processing and lipid biosynthesis. The protein is Glycerol kinase 5 of Homo sapiens (Human).